A 312-amino-acid polypeptide reads, in one-letter code: Ribosomal protein L11 methyltransferase (312 aa).

S-adenosyl-L-methionine-binding residues include T160, G181, D203, and N246.

The protein belongs to the methyltransferase superfamily. PrmA family.

The protein resides in the cytoplasm. It catalyses the reaction L-lysyl-[protein] + 3 S-adenosyl-L-methionine = N(6),N(6),N(6)-trimethyl-L-lysyl-[protein] + 3 S-adenosyl-L-homocysteine + 3 H(+). In terms of biological role, methylates ribosomal protein L11. In Staphylococcus aureus (strain COL), this protein is Ribosomal protein L11 methyltransferase.